The sequence spans 799 residues: MYNHNLVEKKWRKIWKDSNLHTFKDNLKKPKFYALDMFPYPSGAGLHMGHVKSYTPTDVYARFKRYQGYSVLHPMGWDAFGLPAEQFALATKNHPATFTDQNINNFKLQIDQLGFWFDWNKEVNTTDPNFYKWTQWIFIKLFENGLAEIKDIDVNWCQELGTVLANEEVLTDEKGNKVSERGKYPVIKKPMKQWVLKITKFADQLIDDLELTDWTVGLKNIQKKWIGKSIGATVKFKIQNSDSEIEVFTSRPDTIFGVSFIGLSSDHELVLKEKTKNKKIEAFLNELSSLKEYERTAINVEKKGVLLDIKAIHPITKQLVPVYVCNYVLSNYGNGAIMGVPAGDKRDYDFAKLFNLEIKEIIKDHPAPYEEDGIHINSDFLNGLNNEDAIAKIVEYLEKNKIGKKQVNYKLKDWLFSRQRYWGEPFPVLFDEKGNIIVEKNLPLLLPETNDIKPSGTGESPLANLTEWVNVKIDSKLYRRETNTMPQWAGSCWYYLAYLLKDGDSYLPLDSKQAYEIFKRWLPVDIYIGGQEHAVLHLLYARFWHKFLHQINVVPNKEPFYKIINQGMILVNGEKMSKSKGNVVNPSDFVVSHGADALRLYMMFMGPITASLPWEESGIDGMYKWVQRVYRLFETKQIDKNFNDENLEKKYHQFVKKASEFMENFDFNLVISEMMIFINECYKYEKINYDYMLNFCVILSCFAPFITEEINEVFLKNKKFISDNLWPKYDEKKIVETTIKIPVQINGKIREVLEINLGATQKDVVDLAIKNEKIIKWIENKKIVKEIYIENKILNLIIK.

A 'HIGH' region motif is present at residues 39–50 (PYPSGAGLHMGH). The 'KMSKS' region motif lies at 575 to 579 (KMSKS). Residue Lys-578 participates in ATP binding.

It belongs to the class-I aminoacyl-tRNA synthetase family.

Its subcellular location is the cytoplasm. The enzyme catalyses tRNA(Leu) + L-leucine + ATP = L-leucyl-tRNA(Leu) + AMP + diphosphate. The polypeptide is Leucine--tRNA ligase (Malacoplasma penetrans (strain HF-2) (Mycoplasma penetrans)).